The sequence spans 37 residues: Large ribosomal subunit protein bL36B (37 aa).

The protein belongs to the bacterial ribosomal protein bL36 family.

In Aeromonas salmonicida (strain A449), this protein is Large ribosomal subunit protein bL36B.